The primary structure comprises 895 residues: Serine/threonine-protein kinase-like protein ACR4 (895 aa).

A signal peptide spans 1-29 (MRMFETRAREWILLVKLVLFTSIWQLASA). Topologically, residues 30–434 (LGSMSSIAIS…FWSLQLPIAT (405 aa)) are extracellular. 7 consecutive repeat copies span residues 38 to 73 (ISYG…GTPG), 77 to 112 (FIGL…GVPQ), 130 to 167 (LCGL…VFDK), 169 to 202 (LHSL…QVIS), 210 to 245 (FQKI…EEVT), 262 to 296 (LLAV…TPAP), and 301 to 339 (FYDL…AVSP). The interval 38–339 (ISYGEGGSVF…PASIPLAVSP (302 aa)) is 7 X 36 AA repeats. Asparagine 158 and asparagine 196 each carry an N-linked (GlcNAc...) asparagine glycan. N-linked (GlcNAc...) asparagine glycosylation occurs at asparagine 290. The stretch at 346–395 (PCPPGTHELSNQENSPCKFTGSHICLPCSTSCPPGMYQKSVCTERSDQVC) is one TNFR-Cys repeat. Disulfide bonds link cysteine 347/cysteine 370, cysteine 373/cysteine 387, and cysteine 377/cysteine 395. 2 N-linked (GlcNAc...) asparagine glycosylation sites follow: asparagine 398 and asparagine 410. The helical transmembrane segment at 435–455 (AEIGFALFLVAVVSITAALYI) threads the bilayer. Topologically, residues 456–895 (RYRLRNCRCS…GQSLFLHHNF (440 aa)) are cytoplasmic. Phosphoserine is present on serine 475. Positions 512-789 (FKEESIVGKG…KVTTALERAL (278 aa)) constitute a Protein kinase domain. ATP contacts are provided by residues 518–526 (VGKGSFSCV) and lysine 540. The active-site Proton acceptor is aspartate 641. The segment at 818-895 (SWRIGSKRSG…GQSLFLHHNF (78 aa)) is disordered. The segment covering 865–877 (EGRKQQEALRSLE) has biased composition (basic and acidic residues).

The protein belongs to the protein kinase superfamily. Ser/Thr protein kinase family. As to quaternary structure, homodimer. Interacts with PP2A3. Autophosphorylated and phosphorylated by ALE2. Expressed in seedlings, floral buds, siliques, leaves, shoot apical meristems (SAM), and, to a lower extent, in roots.

The protein resides in the cell membrane. The protein localises to the endosome. It is found in the multivesicular body membrane. It catalyses the reaction L-seryl-[protein] + ATP = O-phospho-L-seryl-[protein] + ADP + H(+). The enzyme catalyses L-threonyl-[protein] + ATP = O-phospho-L-threonyl-[protein] + ADP + H(+). In terms of biological role, controls formative cell division in meristems, including root tips and lateral root initiation zones of the pericycle, in response to CLE40 signal. Acts with CLE40p peptide as a ligand-receptor pair in a signal transduction pathway, coordinating movement of the root tip and organization of cell divisions in the root meristem. Required during embryogenesis and development, probably for the differentiation of protoderm and epidermal cells. Involved in the regulation of cellular organization during the development of sepal margins and ovule integument outgrowth and promotes giant cell formation. Can phosphorylate ALE2. This is Serine/threonine-protein kinase-like protein ACR4 from Arabidopsis thaliana (Mouse-ear cress).